A 537-amino-acid chain; its full sequence is Beta-hexosaminidase subunit beta (537 aa).

A signal peptide spans 1-23 (MPGSPRRAPGLLLQALVAMVSLA). A glycan (N-linked (GlcNAc...) asparagine) is linked at asparagine 62. Cysteine 69 and cysteine 115 form a disulfide bridge. Asparagine 168 and asparagine 305 each carry an N-linked (GlcNAc...) asparagine glycan. Disulfide bonds link cysteine 287/cysteine 338 and cysteine 512/cysteine 529. Catalysis depends on glutamate 333, which acts as the Proton donor.

The protein belongs to the glycosyl hydrolase 20 family. In terms of assembly, there are 3 forms of beta-hexosaminidase: hexosaminidase A is a heterodimer composed of one subunit alpha and one subunit beta (chain A and B); hexosaminidase B is a homodimer of two beta subunits (two chains A and B); hexosaminidase S is a homodimer of two alpha subunits. The composition of the dimer (isozyme A versus isozyme S) has a significant effect on the substrate specificity of the alpha subunit active site.

The protein localises to the lysosome. It is found in the cytoplasmic vesicle. Its subcellular location is the secretory vesicle. It localises to the cortical granule. It catalyses the reaction Hydrolysis of terminal non-reducing N-acetyl-D-hexosamine residues in N-acetyl-beta-D-hexosaminides.. The catalysed reaction is N-acetyl-beta-D-galactosaminyl-(1-&gt;4)-beta-D-3-sulfogalactosyl-(1-&gt;4)-beta-D-glucosyl-(1&lt;-&gt;1')-ceramide + H2O = a beta-D-3-sulfogalactosyl-(1-&gt;4)-beta-D-glucosyl-(1&lt;-&gt;1')-ceramide + N-acetyl-beta-D-galactosamine. It carries out the reaction a ganglioside GM2 (d18:1(4E)) + H2O = a ganglioside GM3 (d18:1(4E)) + N-acetyl-beta-D-galactosamine. The enzyme catalyses a ganglioside GM2 + H2O = a ganglioside GM3 + N-acetyl-beta-D-galactosamine. It catalyses the reaction beta-D-GalNAc-(1-&gt;4)-alpha-L-IdoA-(1-&gt;3)-beta-D-GalNAc-4-sulfate-(1-&gt;4)-alpha-L-IdoA-(1-&gt;3)-D-GalNAc-4-sulfate + H2O = alpha-L-IdoA-(1-&gt;3)-beta-D-GalNAc-4-sulfate-(1-&gt;4)-alpha-L-IdoA-(1-&gt;3)-D-GalNAc-4-sulfate + N-acetyl-D-galactosamine. The catalysed reaction is N-acetyl-beta-D-6-sulfogalactosaminyl-(1-&gt;4)-alpha-L-iduronyl-(1-&gt;3)-N-acetyl-D-6-sulfogalactosamine + H2O = alpha-L-iduronyl-(1-&gt;3)-N-acetyl-D-6-sulfogalactosamine + N-acetyl-D-6-sulfogalactosamine. Addition of GM2A stimulates the hydrolysis of sulfated glycosphingolipid SM2 and the ganglioside GM2. In terms of biological role, hydrolyzes the non-reducing end N-acetyl-D-hexosamine and/or sulfated N-acetyl-D-hexosamine of glycoconjugates, such as the oligosaccharide moieties from proteins and neutral glycolipids, or from certain mucopolysaccharides. The isozyme B does not hydrolyze each of these substrates, however hydrolyzes efficiently neutral oligosaccharide. Only the isozyme A is responsible for the degradation of GM2 gangliosides in the presence of GM2A. During fertilization is responsible, at least in part, for the zona block to polyspermy. Present in the cortical granules of non-activated oocytes, is exocytosed during the cortical reaction in response to oocyte activation and inactivates the sperm galactosyltransferase-binding site, accounting for the block in sperm binding to the zona pellucida. In Rattus norvegicus (Rat), this protein is Beta-hexosaminidase subunit beta.